The primary structure comprises 166 residues: Large ribosomal subunit protein mL49 (166 aa).

Belongs to the mitochondrion-specific ribosomal protein mL49 family. As to quaternary structure, component of the mitochondrial ribosome large subunit (39S) which comprises a 16S rRNA and about 50 distinct proteins. Interacts with OXA1L.

Its subcellular location is the mitochondrion. This Bos taurus (Bovine) protein is Large ribosomal subunit protein mL49 (MRPL49).